Reading from the N-terminus, the 521-residue chain is Acetylcholine receptor subunit beta-like 1 (521 aa).

Positions 1–24 are cleaved as a signal peptide; it reads MESSCKSWLLCSILVLVAFSLVSA. Topologically, residues 25–235 are extracellular; sequence SEDEERLVRD…ITFYIIIRRK (211 aa). Residue Asn48 is glycosylated (N-linked (GlcNAc...) asparagine). Cys152 and Cys166 are oxidised to a cystine. 3 helical membrane-spanning segments follow: residues 236–260, 268–286, and 302–323; these read TLFYTVNLILPTVLISFLCVLVFYL, VTLGISILLSLVVFLLLVS, and YLLFTFIMNTVSILVTVIIINW. Over 324-481 the chain is Cytoplasmic; it reads NFRGPRTHRM…WKYVAMVIDR (158 aa). Residues 482-500 traverse the membrane as a helical segment; it reads LQLYIFFIVTTAGTVGILM.

Belongs to the ligand-gated ion channel (TC 1.A.9) family. Acetylcholine receptor (TC 1.A.9.1) subfamily. CNS in embryos.

It localises to the postsynaptic cell membrane. It is found in the cell membrane. Functionally, after binding acetylcholine, the AChR responds by an extensive change in conformation that affects all subunits and leads to opening of an ion-conducting channel across the plasma membrane. The sequence is that of Acetylcholine receptor subunit beta-like 1 (nAChRbeta1) from Drosophila melanogaster (Fruit fly).